The following is a 737-amino-acid chain: MATKFPSFSQGLAQDPTTRRIWYGIATAHDFESHDGMTEERLYQKLFSTHFGHLAIIGLWVSGNLFHIAWQGNFEQWVADPLHVRPIAHAIWDPHFGQGAIDAFTQAGASSPVNIAYSGLYHWFYTIGMKTNAELYQGSIFMMILSAWALFAGWLHLQPKFRPSLAWFKNAESRLNHHLAVLFGFSSIAWTGHLVHVAIPEARGQHVGWDNFLNVLPHPAGLGPFFTGNWGVYAENPDSLNQVFGSSEGAGTAILTFLGGFHPQTEALWLTDIAHHHLAIGCIFVIAGHMYRTNFGIGHSIKEILETHNPPKGTPGDLGAGHKGLYDTINNSLHFQLGLALASLGVVTSLVAQHMYSMPSYAFIAKDYTTQAALYTHHQYIAIALMCGAFAHGAIFFIRDYDPEANKDNVLARMLEHKEAIISHLSWVSLFLGFHTLGLYVHNDVVVAFGTPEKQILVEPVFAQFVQAASGKAMYGMDVLLSNASSSASLAAQNIPGEHYWLDAINGNTDVFLPIGPGDFLVHHAIALGLHTTTLILVKGALDARGSKLMPDKKDFGYSFPCDGPGRGGTCDISAWDAFYLAVFWALNTVGWLTFYWHWKHLAIWSGNVAQFNESSTYLMGWFRDYLWLNSSQLINGYNPFGSNNLAVWAWMFLFGHLVWATGFMFLISWRGYWQELIETIVWAHQRSPIANMMGYRDKPVALSIVQARVVGLAHFTVGYVLTYAAFLIASTSGKFG.

A run of 8 helical transmembrane segments spans residues 46 to 69, 135 to 158, 175 to 199, 273 to 291, 333 to 356, 372 to 398, 420 to 442, and 520 to 538; these read LFST…FHIA, LYQG…LHLQ, LNHH…HVAI, IAHH…GHMY, LHFQ…QHMY, AALY…IFFI, AIIS…LYVH, and FLVH…LILV. [4Fe-4S] cluster-binding residues include cysteine 562 and cysteine 571. The next 2 helical transmembrane spans lie at 578 to 599 and 646 to 668; these read AFYL…YWHW and LAVW…MFLI. 3 residues coordinate chlorophyll a: histidine 657, methionine 665, and tyrosine 673. Tryptophan 674 lines the phylloquinone pocket. Residues 710–730 traverse the membrane as a helical segment; sequence VVGLAHFTVGYVLTYAAFLIA.

Belongs to the PsaA/PsaB family. In terms of assembly, the PsaA/B heterodimer binds the P700 chlorophyll special pair and subsequent electron acceptors. PSI consists of a core antenna complex that captures photons, and an electron transfer chain that converts photonic excitation into a charge separation. The cyanobacterial PSI reaction center is composed of one copy each of PsaA,B,C,D,E,F,I,J,K,L,M and X, and forms trimeric complexes. PSI electron transfer chain: 5 chlorophyll a, 1 chlorophyll a', 2 phylloquinones and 3 4Fe-4S clusters. PSI core antenna: 90 chlorophyll a, 22 carotenoids, 3 phospholipids and 1 galactolipid. P700 is a chlorophyll a/chlorophyll a' dimer, A0 is one or more chlorophyll a, A1 is one or both phylloquinones and FX is a shared 4Fe-4S iron-sulfur center. is required as a cofactor.

It is found in the cellular thylakoid membrane. The catalysed reaction is reduced [plastocyanin] + hnu + oxidized [2Fe-2S]-[ferredoxin] = oxidized [plastocyanin] + reduced [2Fe-2S]-[ferredoxin]. Functionally, psaA and PsaB bind P700, the primary electron donor of photosystem I (PSI), as well as the electron acceptors A0, A1 and FX. PSI is a plastocyanin/cytochrome c6-ferredoxin oxidoreductase, converting photonic excitation into a charge separation, which transfers an electron from the donor P700 chlorophyll pair to the spectroscopically characterized acceptors A0, A1, FX, FA and FB in turn. Oxidized P700 is reduced on the lumenal side of the thylakoid membrane by plastocyanin or cytochrome c6. In Synechococcus sp. (strain CC9605), this protein is Photosystem I P700 chlorophyll a apoprotein A2.